The sequence spans 164 residues: Protein SprT (164 aa).

In terms of domain architecture, SprT-like spans Y13 to V156. H69 is a Zn(2+) binding site. E70 is a catalytic residue. Position 73 (H73) interacts with Zn(2+).

This sequence belongs to the SprT family. Requires Zn(2+) as cofactor.

The protein localises to the cytoplasm. The chain is Protein SprT from Pseudomonas putida (strain ATCC 700007 / DSM 6899 / JCM 31910 / BCRC 17059 / LMG 24140 / F1).